The primary structure comprises 219 residues: Large ribosomal subunit protein uL3 (219 aa).

The protein belongs to the universal ribosomal protein uL3 family. Part of the 50S ribosomal subunit. Forms a cluster with proteins L14 and L19.

One of the primary rRNA binding proteins, it binds directly near the 3'-end of the 23S rRNA, where it nucleates assembly of the 50S subunit. This chain is Large ribosomal subunit protein uL3, found in Chlamydia pneumoniae (Chlamydophila pneumoniae).